A 258-amino-acid polypeptide reads, in one-letter code: Tryptophan synthase alpha chain (258 aa).

Catalysis depends on proton acceptor residues E52 and D63.

It belongs to the TrpA family. As to quaternary structure, tetramer of two alpha and two beta chains.

It carries out the reaction (1S,2R)-1-C-(indol-3-yl)glycerol 3-phosphate + L-serine = D-glyceraldehyde 3-phosphate + L-tryptophan + H2O. It participates in amino-acid biosynthesis; L-tryptophan biosynthesis; L-tryptophan from chorismate: step 5/5. In terms of biological role, the alpha subunit is responsible for the aldol cleavage of indoleglycerol phosphate to indole and glyceraldehyde 3-phosphate. The polypeptide is Tryptophan synthase alpha chain (Streptococcus pneumoniae serotype 4 (strain ATCC BAA-334 / TIGR4)).